The sequence spans 468 residues: Chromosomal replication initiator protein DnaA (468 aa).

A domain I, interacts with DnaA modulators region spans residues 1-84 (MSSSLWLQCL…RFEVGSRRVA (84 aa)). Residues 84–131 (AAPKPAPTRTPADVAAESSAPAQLQARKPVHKTWDDDAQVIADINHRS) are domain II. The span at 85–95 (APKPAPTRTPA) shows a compositional bias: low complexity. The disordered stretch occupies residues 85-104 (APKPAPTRTPADVAAESSAP). The domain III, AAA+ region stretch occupies residues 132-348 (NVNPKHKFNN…GALNRVIANA (217 aa)). ATP contacts are provided by glycine 176, glycine 178, lysine 179, and threonine 180. A domain IV, binds dsDNA region spans residues 349–468 (NFTGRPITID…YSNLIRTLSS (120 aa)).

This sequence belongs to the DnaA family. In terms of assembly, oligomerizes as a right-handed, spiral filament on DNA at oriC.

The protein localises to the cytoplasm. Functionally, plays an essential role in the initiation and regulation of chromosomal replication. ATP-DnaA binds to the origin of replication (oriC) to initiate formation of the DNA replication initiation complex once per cell cycle. Binds the DnaA box (a 9 base pair repeat at the origin) and separates the double-stranded (ds)DNA. Forms a right-handed helical filament on oriC DNA; dsDNA binds to the exterior of the filament while single-stranded (ss)DNA is stabiized in the filament's interior. The ATP-DnaA-oriC complex binds and stabilizes one strand of the AT-rich DNA unwinding element (DUE), permitting loading of DNA polymerase. After initiation quickly degrades to an ADP-DnaA complex that is not apt for DNA replication. Binds acidic phospholipids. In terms of biological role, complements a temperature-sensitive E.coli mutant, the DnaA consensus is 5'-TT(A/T)TNCACA-3'. This chain is Chromosomal replication initiator protein DnaA, found in Vibrio harveyi (Beneckea harveyi).